A 431-amino-acid polypeptide reads, in one-letter code: tRNA(Ile)-lysidine synthase (431 aa).

25-30 (SGGLDS) serves as a coordination point for ATP.

Belongs to the tRNA(Ile)-lysidine synthase family.

It localises to the cytoplasm. The enzyme catalyses cytidine(34) in tRNA(Ile2) + L-lysine + ATP = lysidine(34) in tRNA(Ile2) + AMP + diphosphate + H(+). In terms of biological role, ligates lysine onto the cytidine present at position 34 of the AUA codon-specific tRNA(Ile) that contains the anticodon CAU, in an ATP-dependent manner. Cytidine is converted to lysidine, thus changing the amino acid specificity of the tRNA from methionine to isoleucine. The chain is tRNA(Ile)-lysidine synthase from Legionella pneumophila (strain Lens).